We begin with the raw amino-acid sequence, 308 residues long: Aspartate carbamoyltransferase catalytic subunit (308 aa).

R59 and T60 together coordinate carbamoyl phosphate. An L-aspartate-binding site is contributed by K87. The carbamoyl phosphate site is built by R109, H137, and Q140. L-aspartate-binding residues include R173 and R224. The carbamoyl phosphate site is built by G267 and P268.

It belongs to the aspartate/ornithine carbamoyltransferase superfamily. ATCase family. As to quaternary structure, heterododecamer (2C3:3R2) of six catalytic PyrB chains organized as two trimers (C3), and six regulatory PyrI chains organized as three dimers (R2).

The enzyme catalyses carbamoyl phosphate + L-aspartate = N-carbamoyl-L-aspartate + phosphate + H(+). The protein operates within pyrimidine metabolism; UMP biosynthesis via de novo pathway; (S)-dihydroorotate from bicarbonate: step 2/3. In terms of biological role, catalyzes the condensation of carbamoyl phosphate and aspartate to form carbamoyl aspartate and inorganic phosphate, the committed step in the de novo pyrimidine nucleotide biosynthesis pathway. This chain is Aspartate carbamoyltransferase catalytic subunit, found in Helicobacter acinonychis (strain Sheeba).